The sequence spans 476 residues: MKMNPIVELFIKDFTKEVMEENAAIFAGAGLSMSVGYVSWAKLLEPIAQEIGLDVNKENDLVSLAQYYCNENQGNRGRINQIILDEFSRKVDLTENHKILARLPIHTYWTTNYDRLIEKALEEENKIADVKYTVKQLATTKVKRDAVVYKMHGDVEHPSEAVLIKDDYEKYSIKMDPYIKALSGDLVSKTFLFVGFSFTDPNLDYILSRVRSAYERDQRRHYCLIKKEERRPDELEADFEYRVRKQELFISDLSRFNIKTIVLNNYNEITEILQRIENNIKTKTVFLSGSAVEYNHWETEHAEQFIHQLSKELIRKDFNIVSGFGLGVGSFVINGVLEELYMNQGTIDDDRLILRPFPQGKKGEEQWDKYRRDMITRTGVSIFLYGNKIDKGQVVKAKGVQSEFNISFEQNNYVVPVGATGYIAKDLWNKVNEEFETYYPGADARMKKLFGELNNEALSIEELINTIIEFVEILSN.

The Deacetylase sirtuin-type domain occupies 4-283; that stretch reads NPIVELFIKD…QRIENNIKTK (280 aa). NAD(+) is bound by residues Ala-23, Asp-114, and His-152. The Proton acceptor role is filled by His-152. The tract at residues 284-476 is SLOG (STALD) domain, binds 3'cADPR; the sequence is TVFLSGSAVE…IIEFVEILSN (193 aa). 3'cADPR-binding residues include Gly-289, Ser-290, Leu-326, Phe-357, Arg-371, Lys-388, Gly-399, and Glu-403.

The protein belongs to the soluble Thoeris ThsA family. In terms of assembly, homotetramer formed by dimer of dimers; homooctamers are occasionally seen. Not seen to interact with ThsB. In the absence of the signal generated by ThsB, 63% monomer and 20% homotetramer; in the presence of the ThsB signal product 40% of the protein is dimeric. Homotetramer in solution; probably dimerizes via the N-terminal sirtuin-like domain.

It localises to the cytoplasm. The enzyme catalyses NAD(+) + H2O = ADP-D-ribose + nicotinamide + H(+). Activated by a molecule generated by endogenous ThsB (AC J8G8J6) or ThsB' (AC J8CSK2); activation in vitro is 50-100x more sensitive to 3' cyclic ADP-D-ribose (3'cADPR) than 2'cADPR. 3'cADPR activates the NADase function of ThsA by binding to the SLOG domain, which changes its tetramer organization, allowing NAD to access the active site. Also activated by a signal molecule generated by B.dafuensis TIR1 (AC A0A5B8Z670) and TIR2 (AC A0A5B8Z260), and by BdTIR (AC I1GTC2), a plant protein involved in defense against bacterial infection. The signal produced by BdTIR is probably 2'cADPR, which activates this protein, the signal produced by endogenous ThsB' is probably 3'cADPR. Its function is as follows. NAD(+) hydrolyzing component (NADase) of the Thoeris antiviral defense system, composed of ThsA and ThsB. Activated by a signal molecule generated by endogenous ThsB (AC J8G8J6) or ThsB' (AC J8CSK2, probably 3'cADPR), by TIR1 and TIR2 from B.dafuensis or by BdTIR from B.distachyon (AC I1GTC2, probably 2'cADPR). Upon activation binds and hydrolyzes NAD(+), leading to cell death and inhibition of phage replication. Not seen to bind DNA. Activation is 50-100x more sensitive to 3' cyclic ADP-D-ribose (3'cADPR) than 2'cADPR. In another paper ThsA is not activated by any tested cADPR isomer, although it binds 3'cADPR; it was suggested the protein is already in a fully active state. Expression of ThsA and ThsB in B.subtilis (strain BEST7003) confers resistance to phages phi29, SBSphiC, SBSphiJ and SPO1. At multiplicity of infection (MOI) of 0.05 Thoeris-encoding cultures grow normally when infected with SPO1, at MOI 5 cultures collapse prematurely by 90 minutes post-infection, thus the phage are not able to complete a replication cycle. NAD(+) levels fall and ADP-D-ribose levels rise 60 minutes post-infection. Thoeris cultures eventually recover, but retain the same susceptibility to SPO1. The sequence is that of NAD(+) hydrolase ThsA from Bacillus cereus (strain MSX-D12).